The following is a 367-amino-acid chain: Transcription factor aptf-2 (367 aa).

Residues 29-49 (VPATKETGPSSSAECSTQPAV) are disordered. The segment covering 36–47 (GPSSSAECSTQP) has biased composition (polar residues). Residues 220–354 (AKQKAFPNKV…GVASELRRLT (135 aa)) are H-S-H (helix-span-helix), dimerization.

The protein belongs to the AP-2 family. As to quaternary structure, binds DNA as a dimer.

It is found in the nucleus. It localises to the cytoplasm. In terms of biological role, sequence-specific DNA-binding protein that interacts with enhancer elements to regulate transcription of selected genes. Required for neuroblast and epidermal morphogenesis, perhaps acting in cooperation with transcription factor aptf-4. The protein is Transcription factor aptf-2 of Caenorhabditis elegans.